Here is a 351-residue protein sequence, read N- to C-terminus: Beta-1,4-xylosyltransferase IRX9 (351 aa).

At 1-16 (MGSLERSKKKAQVWKK) the chain is on the cytoplasmic side. A helical; Signal-anchor for type II membrane protein membrane pass occupies residues 17–36 (AVIHFSLCFVMGFFTGFAPA). Residues 37–351 (GKASFFSNFE…KFPTRTRLST (315 aa)) lie on the Lumenal side of the membrane. Residues Asn64 and Asn74 are each glycosylated (N-linked (GlcNAc...) asparagine). The segment at 80 to 107 (SQSQAPAPAESREAEGETRSLSEKEDEN) is disordered. Residues 89–107 (ESREAEGETRSLSEKEDEN) show a composition bias toward basic and acidic residues. N-linked (GlcNAc...) asparagine glycans are attached at residues Asn271 and Asn287.

The protein belongs to the glycosyltransferase 43 family. As to expression, expressed in developing interfascicular fibers, primary and secondary xylem in stems and developing secondary xylem in roots.

The protein localises to the golgi apparatus membrane. The catalysed reaction is [(1-&gt;4)-beta-D-xylan](n) + UDP-alpha-D-xylose = [(1-&gt;4)-beta-D-xylan](n+1) + UDP + H(+). In terms of biological role, involved in the synthesis of the hemicellulose glucuronoxylan, a major component of secondary cell walls. Xylan xylosyltransferase that acts cooperatively with IRX14 to achieve the successive addition of xylosyl residues during xylan backbone elongation. In Arabidopsis thaliana (Mouse-ear cress), this protein is Beta-1,4-xylosyltransferase IRX9.